The following is a 392-amino-acid chain: Pannexin-3 (392 aa).

Over 1 to 39 (MSLAHTAAEYMLSDALLPDRRGSRLKGLRLELPLDKMVK) the chain is Cytoplasmic. The helical transmembrane segment at 40–60 (FITVGFPLLLMSLAFAQEFSS) threads the bilayer. Topologically, residues 61–113 (GSPISCFSPSNFSVRQAAYVDSSCWDSLAHHTQDKAGQYKVKSLWPHKALPYS) are extracellular. A glycan (N-linked (GlcNAc...) asparagine) is linked at Asn71. Residues 114–134 (LLALAVAMYLPVLLWQYVAVP) traverse the membrane as a helical segment. Topologically, residues 135-215 (SLSSDLLFII…VATYLLRNAL (81 aa)) are cytoplasmic. A helical transmembrane segment spans residues 216–236 (LLLFTSATYLYLGQFHLDVFF). The Extracellular portion of the chain corresponds to 237 to 267 (QDEFNCFIKTGLLHDETHVPELITCRLTSLS). A helical membrane pass occupies residues 268–288 (VFQIVSVSSAAIYTILVPVII). Residues 289-392 (YNLTRLCRWD…LTQHTYDEHA (104 aa)) lie on the Cytoplasmic side of the membrane.

Belongs to the pannexin family. In terms of assembly, homoheptameric. In terms of processing, N-glycosylation may play a role in cell surface targeting. Expressed in skin, cartilage, heart, lung, liver, spleen, thymus and kidney. Not expressed in brain. Expressed in calvarial cells.

The protein resides in the cell membrane. Its subcellular location is the endoplasmic reticulum membrane. The catalysed reaction is Ca(2+)(in) = Ca(2+)(out). It carries out the reaction ATP(in) = ATP(out). Regulator of osteoblast differentiation by functionning as a Ca(2+) channel in the endoplasmic reticulum which regulates calmodulin (CaM) pathways. Allows ATP release into the extracellular space and activation or purinergic receptors. This Mus musculus (Mouse) protein is Pannexin-3 (Panx3).